The chain runs to 399 residues: NADH-quinone oxidoreductase subunit D 2 (399 aa).

The interval 1–20 (MIASKESNSAATPATSAPTL) is disordered. Residues 9–20 (SAATPATSAPTL) are compositionally biased toward low complexity.

The protein belongs to the complex I 49 kDa subunit family. In terms of assembly, NDH-1 is composed of 14 different subunits. Subunits NuoB, C, D, E, F, and G constitute the peripheral sector of the complex.

It is found in the cell inner membrane. It carries out the reaction a quinone + NADH + 5 H(+)(in) = a quinol + NAD(+) + 4 H(+)(out). Its function is as follows. NDH-1 shuttles electrons from NADH, via FMN and iron-sulfur (Fe-S) centers, to quinones in the respiratory chain. The immediate electron acceptor for the enzyme in this species is believed to be ubiquinone. Couples the redox reaction to proton translocation (for every two electrons transferred, four hydrogen ions are translocated across the cytoplasmic membrane), and thus conserves the redox energy in a proton gradient. The sequence is that of NADH-quinone oxidoreductase subunit D 2 from Opitutus terrae (strain DSM 11246 / JCM 15787 / PB90-1).